The following is a 280-amino-acid chain: Exfoliative toxin A (280 aa).

The signal sequence occupies residues 1–38 (MNNSKIISKVLLSLSLFTVGASAFVIQDELMQKNHAKA). Residues histidine 110, aspartate 158, and serine 233 each act as charge relay system in the active site.

It belongs to the peptidase S1B family. Ca(2+) serves as cofactor.

In terms of biological role, has serine protease-like properties and binds to the skin protein profilaggrin. Cleaves substrates after acidic residues. Exfoliative toxins cause impetigous diseases commonly referred as staphylococcal scalded skin syndrome (SSSS). The polypeptide is Exfoliative toxin A (eta) (Staphylococcus aureus).